Consider the following 480-residue polypeptide: Glutamyl-tRNA(Gln) amidotransferase subunit A (480 aa).

Active-site charge relay system residues include Lys70 and Ser145. The active-site Acyl-ester intermediate is the Ser169.

Belongs to the amidase family. GatA subfamily. In terms of assembly, heterotrimer of A, B and C subunits.

The enzyme catalyses L-glutamyl-tRNA(Gln) + L-glutamine + ATP + H2O = L-glutaminyl-tRNA(Gln) + L-glutamate + ADP + phosphate + H(+). Allows the formation of correctly charged Gln-tRNA(Gln) through the transamidation of misacylated Glu-tRNA(Gln) in organisms which lack glutaminyl-tRNA synthetase. The reaction takes place in the presence of glutamine and ATP through an activated gamma-phospho-Glu-tRNA(Gln). The sequence is that of Glutamyl-tRNA(Gln) amidotransferase subunit A from Lactobacillus delbrueckii subsp. bulgaricus (strain ATCC 11842 / DSM 20081 / BCRC 10696 / JCM 1002 / NBRC 13953 / NCIMB 11778 / NCTC 12712 / WDCM 00102 / Lb 14).